Here is a 254-residue protein sequence, read N- to C-terminus: Homeobox protein Dlx4b (254 aa).

Positions 129-188 form a DNA-binding region, homeobox; it reads IRKPRTIYSSVQLQALHQRFQQTQYLALPERADLAAKLGLTQTQVKIWFQNKRSKYKKIM.

This sequence belongs to the distal-less homeobox family.

The protein resides in the nucleus. During larvae development, may be important for neurocranium morphogenesis. The chain is Homeobox protein Dlx4b (dlx4b) from Danio rerio (Zebrafish).